A 308-amino-acid chain; its full sequence is Ribosomal protein L11 methyltransferase (308 aa).

S-adenosyl-L-methionine contacts are provided by Thr148, Gly169, Asp191, and Asn239.

This sequence belongs to the methyltransferase superfamily. PrmA family.

It is found in the cytoplasm. It carries out the reaction L-lysyl-[protein] + 3 S-adenosyl-L-methionine = N(6),N(6),N(6)-trimethyl-L-lysyl-[protein] + 3 S-adenosyl-L-homocysteine + 3 H(+). Its function is as follows. Methylates ribosomal protein L11. The protein is Ribosomal protein L11 methyltransferase of Psychrobacter arcticus (strain DSM 17307 / VKM B-2377 / 273-4).